The sequence spans 271 residues: Acetyl-coenzyme A carboxylase carboxyl transferase subunit beta (271 aa).

A CoA carboxyltransferase N-terminal domain is found at 21–271 (LWIQCPYCKQ…LGDLLALHTA (251 aa)). Zn(2+) is bound by residues Cys25, Cys28, Cys43, and Cys46. Residues 25 to 46 (CPYCKQGSYRESLGNAQVCPHC) form a C4-type zinc finger.

The protein belongs to the AccD/PCCB family. As to quaternary structure, acetyl-CoA carboxylase is a heterohexamer composed of biotin carboxyl carrier protein (AccB), biotin carboxylase (AccC) and two subunits each of ACCase subunit alpha (AccA) and ACCase subunit beta (AccD). Requires Zn(2+) as cofactor.

Its subcellular location is the cytoplasm. The enzyme catalyses N(6)-carboxybiotinyl-L-lysyl-[protein] + acetyl-CoA = N(6)-biotinyl-L-lysyl-[protein] + malonyl-CoA. It functions in the pathway lipid metabolism; malonyl-CoA biosynthesis; malonyl-CoA from acetyl-CoA: step 1/1. In terms of biological role, component of the acetyl coenzyme A carboxylase (ACC) complex. Biotin carboxylase (BC) catalyzes the carboxylation of biotin on its carrier protein (BCCP) and then the CO(2) group is transferred by the transcarboxylase to acetyl-CoA to form malonyl-CoA. This Lacticaseibacillus paracasei (strain ATCC 334 / BCRC 17002 / CCUG 31169 / CIP 107868 / KCTC 3260 / NRRL B-441) (Lactobacillus paracasei) protein is Acetyl-coenzyme A carboxylase carboxyl transferase subunit beta.